The sequence spans 146 residues: Hemoglobin subunit beta-1 (146 aa).

Residues 2-146 (VWTNEERSII…VVSALGKQYH (145 aa)) form the Globin domain. Heme b is bound by residues histidine 63 and histidine 92.

Belongs to the globin family. As to quaternary structure, hb1 is a heterotetramer of two alpha chains and two beta-1 chains. Red blood cells.

Its function is as follows. Involved in oxygen transport from gills to the various peripheral tissues. This chain is Hemoglobin subunit beta-1 (hbb1), found in Pseudaphritis urvillii (Congolli).